The chain runs to 401 residues: tRNA(Met) cytidine acetate ligase (401 aa).

ATP is bound by residues 7-20 (IVEY…HLYH), glycine 102, asparagine 164, and arginine 189.

This sequence belongs to the TmcAL family.

It is found in the cytoplasm. The enzyme catalyses cytidine(34) in elongator tRNA(Met) + acetate + ATP = N(4)-acetylcytidine(34) in elongator tRNA(Met) + AMP + diphosphate. Its function is as follows. Catalyzes the formation of N(4)-acetylcytidine (ac(4)C) at the wobble position of elongator tRNA(Met), using acetate and ATP as substrates. First activates an acetate ion to form acetyladenylate (Ac-AMP) and then transfers the acetyl group to tRNA to form ac(4)C34. This chain is tRNA(Met) cytidine acetate ligase, found in Thermoanaerobacter pseudethanolicus (strain ATCC 33223 / 39E) (Clostridium thermohydrosulfuricum).